Reading from the N-terminus, the 304-residue chain is Undecaprenyl-diphosphatase (304 aa).

8 consecutive transmembrane segments (helical) span residues 5–25 (FLFILKALIIAIVEGLTEFVP), 47–67 (GFPEMYEVVIQLGAILAVVVL), 72–92 (ISSSVVEFLSYIFSFIGLKTS), 111–131 (FGINVIIGTIPAAILGLLFHD), 137–157 (LFSTKTVAIGFIVGGILLIVI), 209–231 (ISGLSTTVATEFTFFLAIPAMVG), 248–268 (TNWISLILGFIVAFIVSLVVI), and 283–303 (FAIYRVFAGIVLAILIFTKVI).

The protein belongs to the UppP family.

The protein resides in the cell membrane. The enzyme catalyses di-trans,octa-cis-undecaprenyl diphosphate + H2O = di-trans,octa-cis-undecaprenyl phosphate + phosphate + H(+). Functionally, catalyzes the dephosphorylation of undecaprenyl diphosphate (UPP). Confers resistance to bacitracin. The protein is Undecaprenyl-diphosphatase of Clostridium perfringens (strain 13 / Type A).